A 94-amino-acid polypeptide reads, in one-letter code: Phosphoribosyl-ATP pyrophosphatase (94 aa).

This sequence belongs to the PRA-PH family.

The protein resides in the cytoplasm. The catalysed reaction is 1-(5-phospho-beta-D-ribosyl)-ATP + H2O = 1-(5-phospho-beta-D-ribosyl)-5'-AMP + diphosphate + H(+). It functions in the pathway amino-acid biosynthesis; L-histidine biosynthesis; L-histidine from 5-phospho-alpha-D-ribose 1-diphosphate: step 2/9. The protein is Phosphoribosyl-ATP pyrophosphatase of Pyrobaculum arsenaticum (strain DSM 13514 / JCM 11321 / PZ6).